The following is a 207-amino-acid chain: Glycerol-3-phosphate acyltransferase (207 aa).

6 helical membrane passes run 1 to 21 (MIII…GKYF), 42 to 62 (ILGV…GTLA), 65 to 85 (IPII…FAII), 105 to 125 (AGVL…IFLL), 138 to 158 (ITVA…GFIL), and 159 to 179 (TDYD…IIIR).

Belongs to the PlsY family. Probably interacts with PlsX.

The protein resides in the cell membrane. The enzyme catalyses an acyl phosphate + sn-glycerol 3-phosphate = a 1-acyl-sn-glycero-3-phosphate + phosphate. It functions in the pathway lipid metabolism; phospholipid metabolism. Catalyzes the transfer of an acyl group from acyl-phosphate (acyl-PO(4)) to glycerol-3-phosphate (G3P) to form lysophosphatidic acid (LPA). This enzyme utilizes acyl-phosphate as fatty acyl donor, but not acyl-CoA or acyl-ACP. The sequence is that of Glycerol-3-phosphate acyltransferase from Streptococcus agalactiae serotype Ia (strain ATCC 27591 / A909 / CDC SS700).